A 98-amino-acid chain; its full sequence is NADH-ubiquinone oxidoreductase chain 4L (98 aa).

Transmembrane regions (helical) follow at residues 1–21 (MSMVYINIFLAFILSFMGLLI), 30–50 (LLCLEGMMLSLFIMMTVTILT), and 61–81 (IILLVFAACEAALGLSLLVMI).

Belongs to the complex I subunit 4L family. Core subunit of respiratory chain NADH dehydrogenase (Complex I) which is composed of 45 different subunits.

It localises to the mitochondrion inner membrane. It catalyses the reaction a ubiquinone + NADH + 5 H(+)(in) = a ubiquinol + NAD(+) + 4 H(+)(out). Its function is as follows. Core subunit of the mitochondrial membrane respiratory chain NADH dehydrogenase (Complex I) which catalyzes electron transfer from NADH through the respiratory chain, using ubiquinone as an electron acceptor. Part of the enzyme membrane arm which is embedded in the lipid bilayer and involved in proton translocation. The sequence is that of NADH-ubiquinone oxidoreductase chain 4L (MT-ND4L) from Martes americana (American marten).